A 758-amino-acid polypeptide reads, in one-letter code: Polyribonucleotide nucleotidyltransferase (758 aa).

Positions 482 and 488 each coordinate Mg(2+). The region spanning 549–608 (PRVLSFYIDKDKISAAIGTKGKNIRSVCERSNAKIEIGDDGKVSVFAISSTEAEAAKNMM) is the KH domain. Positions 618–686 (GSIIDAKVVK…KGGCPKLSRR (69 aa)) constitute an S1 motif domain. The tract at residues 707–758 (DGLNNRDNYYNNSFNKKPEDNYHSNRPTRPRSGFSNRSRPKFGNNDSSSGFY) is disordered. Low complexity predominate over residues 711 to 721 (NRDNYYNNSFN).

Belongs to the polyribonucleotide nucleotidyltransferase family. Mg(2+) serves as cofactor.

The protein resides in the cytoplasm. The enzyme catalyses RNA(n+1) + phosphate = RNA(n) + a ribonucleoside 5'-diphosphate. In terms of biological role, involved in mRNA degradation. Catalyzes the phosphorolysis of single-stranded polyribonucleotides processively in the 3'- to 5'-direction. This chain is Polyribonucleotide nucleotidyltransferase, found in Wolbachia pipientis subsp. Culex pipiens (strain wPip).